A 480-amino-acid polypeptide reads, in one-letter code: Aspartyl/glutamyl-tRNA(Asn/Gln) amidotransferase subunit B (480 aa).

It belongs to the GatB/GatE family. GatB subfamily. As to quaternary structure, heterotrimer of A, B and C subunits.

It carries out the reaction L-glutamyl-tRNA(Gln) + L-glutamine + ATP + H2O = L-glutaminyl-tRNA(Gln) + L-glutamate + ADP + phosphate + H(+). It catalyses the reaction L-aspartyl-tRNA(Asn) + L-glutamine + ATP + H2O = L-asparaginyl-tRNA(Asn) + L-glutamate + ADP + phosphate + 2 H(+). Allows the formation of correctly charged Asn-tRNA(Asn) or Gln-tRNA(Gln) through the transamidation of misacylated Asp-tRNA(Asn) or Glu-tRNA(Gln) in organisms which lack either or both of asparaginyl-tRNA or glutaminyl-tRNA synthetases. The reaction takes place in the presence of glutamine and ATP through an activated phospho-Asp-tRNA(Asn) or phospho-Glu-tRNA(Gln). The chain is Aspartyl/glutamyl-tRNA(Asn/Gln) amidotransferase subunit B from Caldicellulosiruptor bescii (strain ATCC BAA-1888 / DSM 6725 / KCTC 15123 / Z-1320) (Anaerocellum thermophilum).